Consider the following 337-residue polypeptide: Protein LEG1 homolog (337 aa).

Residues Met1 to Ala20 form the signal peptide. Asn171 carries N-linked (GlcNAc...) asparagine glycosylation.

Belongs to the LEG1 family.

The protein localises to the secreted. Functionally, may be involved in early liver development. The sequence is that of Protein LEG1 homolog from Mus musculus (Mouse).